The following is a 1562-amino-acid chain: E3 ubiquitin-protein ligase listerin (1562 aa).

HEAT repeat units lie at residues 41–78 (SLYS…DFNQ), 127–164 (KFLK…KDPA), 175–217 (EQLL…SAVL), 262–301 (ETVL…ITSK), 304–348 (LKVC…VSRT), 495–532 (SAIS…FLDS), 555–592 (STYQ…VALS), 813–850 (IRYA…DYNC), 908–945 (YYSR…KTVR), 997–1037 (FKSL…WLDS), 1047–1085 (TVRL…DSLS), 1188–1226 (INQS…SDVD), 1263–1298 (NSFI…KEAG), and 1299–1339 (LINR…NFSP). The segment at 1508-1555 (CAICYSILHAVDRKLPSKTCPTCKNKFHGACLYKWFRSSGNNTCPLCR) adopts an RING-type zinc-finger fold.

Belongs to the LTN1 family. Component of the ribosome quality control complex (RQC), composed of the E3 ubiquitin ligase RKR1/LTN1, RQC1 and RQC2, as well as CDC48 and its ubiquitin-binding cofactors associated with the 60S ribosomal subunits.

The protein resides in the nucleus. It is found in the cytoplasm. The protein localises to the cytosol. It catalyses the reaction S-ubiquitinyl-[E2 ubiquitin-conjugating enzyme]-L-cysteine + [acceptor protein]-L-lysine = [E2 ubiquitin-conjugating enzyme]-L-cysteine + N(6)-ubiquitinyl-[acceptor protein]-L-lysine.. It participates in protein modification; protein ubiquitination. Functionally, E3 ubiquitin-protein ligase component of the ribosome quality control complex (RQC), a ribosome-associated complex that mediates ubiquitination and extraction of incompletely synthesized nascent chains for proteasomal degradation. Mediates ubiquitination of proteins derived from mRNAs lacking stop codons (non-stop proteins) and other translation arrest products induced by poly-lysine sequences and tandem rare codons. Ubiquitination leads to CDC48 recruitment for extraction and degradation of the incomplete translation product. May indirectly play a role in chromatin function and transcription. This is E3 ubiquitin-protein ligase listerin from Saccharomyces cerevisiae (strain ATCC 204508 / S288c) (Baker's yeast).